The primary structure comprises 435 residues: ATP-dependent protease ATPase subunit HslU (435 aa).

ATP is bound by residues valine 18, 60–65 (GVGKTE), aspartate 248, glutamate 313, and arginine 385.

This sequence belongs to the ClpX chaperone family. HslU subfamily. As to quaternary structure, a double ring-shaped homohexamer of HslV is capped on each side by a ring-shaped HslU homohexamer. The assembly of the HslU/HslV complex is dependent on binding of ATP.

The protein resides in the cytoplasm. In terms of biological role, ATPase subunit of a proteasome-like degradation complex; this subunit has chaperone activity. The binding of ATP and its subsequent hydrolysis by HslU are essential for unfolding of protein substrates subsequently hydrolyzed by HslV. HslU recognizes the N-terminal part of its protein substrates and unfolds these before they are guided to HslV for hydrolysis. The protein is ATP-dependent protease ATPase subunit HslU of Azorhizobium caulinodans (strain ATCC 43989 / DSM 5975 / JCM 20966 / LMG 6465 / NBRC 14845 / NCIMB 13405 / ORS 571).